Consider the following 478-residue polypeptide: Sulfate adenylyltransferase subunit 1 (478 aa).

The region spanning 24 to 240 (KSMLRFLTCG…VLEDIDIDAD (217 aa)) is the tr-type G domain. The segment at 33-40 (GSVDDGKS) is G1. 33-40 (GSVDDGKS) is a binding site for GTP. A G2 region spans residues 91–95 (GITID). Positions 112–115 (DTPG) are G3. GTP contacts are provided by residues 112 to 116 (DTPGH) and 167 to 170 (NKMD). Residues 167–170 (NKMD) are G4. Residues 206–208 (SAL) form a G5 region.

Belongs to the TRAFAC class translation factor GTPase superfamily. Classic translation factor GTPase family. CysN/NodQ subfamily. As to quaternary structure, heterodimer composed of CysD, the smaller subunit, and CysN.

The catalysed reaction is sulfate + ATP + H(+) = adenosine 5'-phosphosulfate + diphosphate. The protein operates within sulfur metabolism; hydrogen sulfide biosynthesis; sulfite from sulfate: step 1/3. With CysD forms the ATP sulfurylase (ATPS) that catalyzes the adenylation of sulfate producing adenosine 5'-phosphosulfate (APS) and diphosphate, the first enzymatic step in sulfur assimilation pathway. APS synthesis involves the formation of a high-energy phosphoric-sulfuric acid anhydride bond driven by GTP hydrolysis by CysN coupled to ATP hydrolysis by CysD. The sequence is that of Sulfate adenylyltransferase subunit 1 from Aliivibrio salmonicida (strain LFI1238) (Vibrio salmonicida (strain LFI1238)).